A 265-amino-acid polypeptide reads, in one-letter code: Phosphatidylglycerol--prolipoprotein diacylglyceryl transferase (265 aa).

The next 4 membrane-spanning stretches (helical) occupy residues 17 to 37 (LSIR…WLLG), 56 to 76 (LVTY…MLFY), 92 to 112 (WQGG…VWFF), and 117 to 137 (GKGF…GLFA). A 1,2-diacyl-sn-glycero-3-phospho-(1'-sn-glycerol) is bound at residue Arg139. The next 3 helical transmembrane spans lie at 173–193 (PSQL…VWLY), 201–221 (GAVS…VELV), and 235–255 (WLTM…WLLA).

It belongs to the Lgt family.

Its subcellular location is the cell inner membrane. It carries out the reaction L-cysteinyl-[prolipoprotein] + a 1,2-diacyl-sn-glycero-3-phospho-(1'-sn-glycerol) = an S-1,2-diacyl-sn-glyceryl-L-cysteinyl-[prolipoprotein] + sn-glycerol 1-phosphate + H(+). It participates in protein modification; lipoprotein biosynthesis (diacylglyceryl transfer). Catalyzes the transfer of the diacylglyceryl group from phosphatidylglycerol to the sulfhydryl group of the N-terminal cysteine of a prolipoprotein, the first step in the formation of mature lipoproteins. The chain is Phosphatidylglycerol--prolipoprotein diacylglyceryl transferase from Solidesulfovibrio magneticus (strain ATCC 700980 / DSM 13731 / RS-1) (Desulfovibrio magneticus).